We begin with the raw amino-acid sequence, 466 residues long: Asparagine--tRNA ligase (466 aa).

It belongs to the class-II aminoacyl-tRNA synthetase family. Homodimer.

The protein resides in the cytoplasm. It carries out the reaction tRNA(Asn) + L-asparagine + ATP = L-asparaginyl-tRNA(Asn) + AMP + diphosphate + H(+). This Shewanella denitrificans (strain OS217 / ATCC BAA-1090 / DSM 15013) protein is Asparagine--tRNA ligase.